The primary structure comprises 168 residues: Mitochondrial ATP-independent inner membrane protease subunit 1a (168 aa).

A mitochondrion-targeting transit peptide spans 1-47 (MRMTFLSYLKQWRGTAKEAFENVSIVAKFLCLLHVTDRYIISTTHVH). Active-site residues include Ser50 and Lys94.

This sequence belongs to the peptidase S26 family. IMP1 subfamily. In terms of assembly, heterodimer of 2 subunits, IMP1A/B and IMP12.

The protein localises to the mitochondrion inner membrane. Its function is as follows. Catalyzes the removal of transit peptides required for the targeting of proteins from the mitochondrial matrix, across the inner membrane, into the inter-membrane space. The protein is Mitochondrial ATP-independent inner membrane protease subunit 1a of Arabidopsis thaliana (Mouse-ear cress).